Consider the following 334-residue polypeptide: Anthranilate phosphoribosyltransferase (334 aa).

Residues Gly79, 82-83 (GD), Ser87, 89-92 (NIST), 107-115 (KHGNRSISS), and Ser119 contribute to the 5-phospho-alpha-D-ribose 1-diphosphate site. Gly79 contributes to the anthranilate binding site. Ser91 serves as a coordination point for Mg(2+). Asn110 contributes to the anthranilate binding site. Position 165 (Arg165) interacts with anthranilate. Mg(2+)-binding residues include Asp224 and Glu225.

It belongs to the anthranilate phosphoribosyltransferase family. As to quaternary structure, homodimer. The cofactor is Mg(2+).

The catalysed reaction is N-(5-phospho-beta-D-ribosyl)anthranilate + diphosphate = 5-phospho-alpha-D-ribose 1-diphosphate + anthranilate. The protein operates within amino-acid biosynthesis; L-tryptophan biosynthesis; L-tryptophan from chorismate: step 2/5. Catalyzes the transfer of the phosphoribosyl group of 5-phosphorylribose-1-pyrophosphate (PRPP) to anthranilate to yield N-(5'-phosphoribosyl)-anthranilate (PRA). In Streptococcus pneumoniae (strain ATCC 700669 / Spain 23F-1), this protein is Anthranilate phosphoribosyltransferase.